We begin with the raw amino-acid sequence, 100 residues long: NADH-quinone oxidoreductase subunit K (100 aa).

3 consecutive transmembrane segments (helical) span residues 4 to 24 (LFHG…SLIV), 28 to 48 (ILFI…ALIV), and 60 to 80 (IMYI…LALL).

Belongs to the complex I subunit 4L family. In terms of assembly, NDH-1 is composed of 13 different subunits. Subunits NuoA, H, J, K, L, M, N constitute the membrane sector of the complex.

The protein localises to the cell membrane. The catalysed reaction is a quinone + NADH + 5 H(+)(in) = a quinol + NAD(+) + 4 H(+)(out). Its function is as follows. NDH-1 shuttles electrons from NADH, via FMN and iron-sulfur (Fe-S) centers, to quinones in the respiratory chain. The immediate electron acceptor for the enzyme in this species is believed to be ubiquinone. Couples the redox reaction to proton translocation (for every two electrons transferred, four hydrogen ions are translocated across the cytoplasmic membrane), and thus conserves the redox energy in a proton gradient. The sequence is that of NADH-quinone oxidoreductase subunit K from Buchnera aphidicola subsp. Acyrthosiphon pisum (strain 5A).